Consider the following 1377-residue polypeptide: DNA-directed RNA polymerase subunit beta' (1377 aa).

Residues Cys60, Cys62, Cys75, and Cys78 each contribute to the Zn(2+) site. Residues Asp449, Asp451, and Asp453 each contribute to the Mg(2+) site. Zn(2+)-binding residues include Cys777, Cys851, Cys858, and Cys861.

This sequence belongs to the RNA polymerase beta' chain family. The RNAP catalytic core consists of 2 alpha, 1 beta, 1 beta' and 1 omega subunit. When a sigma factor is associated with the core the holoenzyme is formed, which can initiate transcription. The cofactor is Mg(2+). Zn(2+) serves as cofactor.

It catalyses the reaction RNA(n) + a ribonucleoside 5'-triphosphate = RNA(n+1) + diphosphate. Functionally, DNA-dependent RNA polymerase catalyzes the transcription of DNA into RNA using the four ribonucleoside triphosphates as substrates. The protein is DNA-directed RNA polymerase subunit beta' of Borreliella afzelii (strain PKo) (Borrelia afzelii).